The sequence spans 624 residues: Phragmoplastin DRP1E (624 aa).

Thr2 carries the post-translational modification N-acetylthreonine. The Dynamin-type G domain maps to Trp37–Pro306. A G1 motif region spans residues Gly47 to Ser54. Position 50 to 55 (Ser50 to Ser55) interacts with GTP. Residues Val73–Arg75 are G2 motif. Positions Asp148–Gly151 are G3 motif. The interval Thr217–Asp220 is G4 motif. Residues Lys218 to Asp223 and Asn248 to Gln251 each bind GTP. Positions Val247–Ser250 are G5 motif. The GED domain maps to Phe532–Arg624.

The protein belongs to the TRAFAC class dynamin-like GTPase superfamily. Dynamin/Fzo/YdjA family. As to quaternary structure, forms homodimer and may homooligomerize and heterooligomerize to form the phragmoplastin complex. Binds to PHIP1. Ubiquitous.

Its subcellular location is the cytoplasm. The protein localises to the cytoskeleton. It is found in the phragmoplast. The catalysed reaction is GTP + H2O = GDP + phosphate + H(+). Functionally, microtubule-associated force-producing protein that is targeted to the tubulo-vesicular network of the forming cell plate during cytokinesis. Also plays a major role in plasma membrane maintenance and cell wall integrity with an implication in vesicular trafficking, polar cell expansion, and other aspects of plant growth and development. Has a GTPase activity. The chain is Phragmoplastin DRP1E from Arabidopsis thaliana (Mouse-ear cress).